Here is an 817-residue protein sequence, read N- to C-terminus: Two pore calcium channel protein 1 (817 aa).

Over 1–101 (MSVILDDDVL…PKDARALAAY (101 aa)) the chain is Cytoplasmic. Residues 22–66 (PLTPSNGLGQEDLPSKNGGGQSGPNSQVPSLVSGADSPPSSPPGH) are disordered. The chain crosses the membrane as a helical span at residues 102–122 (LFVHNHFFYMMELLTALLLLL). The Extracellular segment spans residues 123-137 (LSLCESPAVPALKLR). A helical transmembrane segment spans residues 138-158 (TYVHATLELFALMVVVFELCM). Residues 159 to 172 (KLRWLGFHTFVRHK) are Cytoplasmic-facing. The helical transmembrane segment at 173–193 (RTMVKTSVLVVQFIEAIVVLV) threads the bilayer. The Extracellular segment spans residues 194 to 202 (RQTSHVRVT). A helical transmembrane segment spans residues 203 to 221 (RALRCIFLVDCRYCGGVRR). At 222–235 (NLRQIFQSLPPFMD) the chain is on the cytoplasmic side. A helical transmembrane segment spans residues 236–256 (ILLLLLFFMIIFAILGFYLFS). The Extracellular portion of the chain corresponds to 257–263 (TNPSDPY). The helical; Pore-forming intramembrane region spans 264–287 (FNTLENSIVNLFVLLTTANFPDVM). Topologically, residues 288-298 (MPSYSRNPWSC) are extracellular. Residues 299 to 319 (VFFIVYLSIELYFIMNLLLAV) traverse the membrane as a helical segment. Topologically, residues 320–445 (VFDTFNDIEK…NILVNSKAFQ (126 aa)) are cytoplasmic. The chain crosses the membrane as a helical span at residues 446–466 (YFMYLVVAVNGVWILVETFML). The Extracellular segment spans residues 467–480 (KGGNFISKHVPWSY). A helical membrane pass occupies residues 481–501 (LVFLTIYGVELFMKVAGLGPV). The Cytoplasmic segment spans residues 502 to 504 (EYL). The chain crosses the membrane as a helical span at residues 505-527 (SSGWNLFDFSVTAFAFLGLLALT). At 528–535 (LNMEPFYF) the chain is on the extracellular side. Residues 536–550 (IVVLRPLQLLRLFKL) form a helical membrane-spanning segment. Over 551 to 574 (KKRYRNVLDTMFELLPRMASLGLT) the chain is Cytoplasmic. A helical membrane pass occupies residues 575–595 (LLTFYYSFAIVGMEFFSGRLS). The Extracellular portion of the chain corresponds to 596–630 (PNCCNSSTVADAYRFINHTVGNKTKVEEGYYYLNN). An intramembrane region (helical; Pore-forming) is located at residues 631-654 (FDNILNSFVTLFELTVVNNWYIIM). Residues 655–671 (EGVTSQTSHWSRLYFMT) lie on the Extracellular side of the membrane. The chain crosses the membrane as a helical span at residues 672–692 (FYIVTMVVMTIIVAFILEAFV). Topologically, residues 693–817 (FRMNYSRKSQ…GSRQRSQTVT (125 aa)) are cytoplasmic. The stretch at 770-794 (SLKMYQEEIQEWYEEHAREQEQQQL) forms a coiled coil. The tract at residues 785–817 (HAREQEQQQLRGSAPSPAAQQTPGSRQRSQTVT) is disordered. Polar residues predominate over residues 802–817 (AAQQTPGSRQRSQTVT).

The protein belongs to the calcium channel alpha-1 subunit (TC 1.A.1.11) family. Two pore calcium channel subfamily. As to quaternary structure, dimer. Interacts with MTOR; the interaction is required for TPCN1 ATP sensitivity. Interacts with STX7, STX8 and STX12. Interacts with JPT2. Found in a complex with LSM12, TPCN1 and TPCN2. In terms of processing, N-glycosylated. As to expression, widely expressed. Expressed at relatively high level in kidney, liver and lung, and in the kidney it is expressed at inner medullary collecting ducts.

It localises to the lysosome membrane. It is found in the endosome membrane. The protein resides in the early endosome membrane. The protein localises to the recycling endosome membrane. It carries out the reaction Na(+)(in) = Na(+)(out). The enzyme catalyses Ca(2+)(in) = Ca(2+)(out). Its activity is regulated as follows. Na(+) current is inhibited by ATP in a MTORC-dependent manner. ATP sensitivity is independent of PI(3,5)P2. Probably regulated by Mg(2+) ions, cytosolic Mg(2+) selectively inhibits outward current while lysosomal Mg(2+) modestly inhibits both the outward and inward currents. In the absence of Mg(2+), NAADP readily activates TPCN2, with properties similar to PI(3,5)P2. Both current elicited by PI(3,5)P2 as well as NAADP are inhibited by tetrandrine. In terms of biological role, intracellular channel initially characterized as a non-selective Ca(2+)-permeable channel activated by NAADP (nicotinic acid adenine dinucleotide phosphate), it is also a voltage-gated highly-selective Na(+) channel activated directly by PI(3,5)P2 (phosphatidylinositol 3,5-bisphosphate) that senses pH changes and confers electrical excitability to organelles. Localizes to the early and recycling endosomes membranes where it plays a role in the uptake and processing of proteins and regulates organellar membrane excitability, membrane trafficking and pH homeostasis. Ion selectivity is not fixed but rather agonist-dependent and under defined ionic conditions, can be readily activated by both NAADP and PI(3,5)P2. Required for mTOR-dependent nutrient sensing. The sequence is that of Two pore calcium channel protein 1 (Tpcn1) from Rattus norvegicus (Rat).